Reading from the N-terminus, the 430-residue chain is MALLHSGRALPGIAAAFHPGLAAAASARASSWWTHVEMGPPDPILGVTEAFKRDTNSKKMNLGVGAYRDDNGKPYVLPSVRKAEAQIAAKNLDKEYLPIGGLAEFCKASAELALGENSEVLKSGRFVTVQTISGTGALRIGASFLQRFFKFSRDVFLPKPSWGNHTPIFRDAGMQLQGYRYYDPKTCGFDFTGAVEDISKIPEQSVLLLHACAHNPTGVDPRPEQWKEIATVVKKRNLFAFFDMAYQGFASGDGDKDAWAVRHFIEQGINVCLCQSYAKNMGLYGERVGAFTMVCKDADEAKRVESQLKILIRPMYSNPPLNGARIAAAILNTPDLRKQWLQEVKGMADRIIGMRTQLVSNLKKEGSTHNWQHITDQIGMFCFTGLKPEQVERLIKEFSIYMTKDGRISVAGVTSSNVGYLAHAIHQVTK.

A mitochondrion-targeting transit peptide spans 1 to 29 (MALLHSGRALPGIAAAFHPGLAAAASARA). The residue at position 48 (Thr-48) is a Phosphothreonine. N6-acetyllysine is present on Lys-59. Gly-65 contacts substrate. An N6-acetyllysine; alternate modification is found at Lys-73. N6-succinyllysine; alternate is present on Lys-73. Lys-82 bears the N6-acetyllysine mark. N6-acetyllysine; alternate is present on Lys-90. Lys-90 is subject to N6-succinyllysine; alternate. Residue Tyr-96 is modified to 3'-nitrotyrosine; alternate. A Phosphotyrosine; alternate modification is found at Tyr-96. Lys-107 and Lys-122 each carry N6-acetyllysine; alternate. 2 positions are modified to N6-succinyllysine; alternate: Lys-107 and Lys-122. Ser-143 carries the post-translational modification Phosphoserine. The residue at position 159 (Lys-159) is an N6-acetyllysine; alternate. At Lys-159 the chain carries N6-succinyllysine; alternate. Trp-162 contributes to the substrate binding site. Residue Lys-185 is modified to N6-acetyllysine; alternate. Lys-185 carries the post-translational modification N6-succinyllysine; alternate. Position 215 (Asn-215) interacts with substrate. Lys-227 bears the N6-succinyllysine mark. Lys-234 carries the post-translational modification N6-acetyllysine. Lys-279 and Lys-296 each carry N6-acetyllysine; alternate. Residue Lys-279 is modified to N6-(pyridoxal phosphate)lysine; alternate. Lys-296 bears the N6-succinyllysine; alternate mark. Residue Lys-302 is modified to N6-acetyllysine. An N6-acetyllysine; alternate modification is found at Lys-309. At Lys-309 the chain carries N6-succinyllysine; alternate. Asymmetric dimethylarginine is present on Arg-313. Thr-333 carries the post-translational modification Phosphothreonine. N6-acetyllysine; alternate is present on Lys-338. At Lys-338 the chain carries N6-succinyllysine; alternate. Lys-345 carries the post-translational modification N6-acetyllysine. Lys-363 bears the N6-acetyllysine; alternate mark. Lys-363 carries the post-translational modification N6-succinyllysine; alternate. N6-acetyllysine occurs at positions 364 and 387. An N6-acetyllysine; alternate mark is found at Lys-396 and Lys-404. Lys-396 and Lys-404 each carry N6-succinyllysine; alternate. Residue Arg-407 participates in substrate binding.

It belongs to the class-I pyridoxal-phosphate-dependent aminotransferase family. As to quaternary structure, homodimer. Requires pyridoxal 5'-phosphate as cofactor.

It localises to the mitochondrion matrix. Its subcellular location is the cell membrane. It carries out the reaction L-aspartate + 2-oxoglutarate = oxaloacetate + L-glutamate. It catalyses the reaction L-kynurenine + 2-oxoglutarate = kynurenate + L-glutamate + H2O. Functionally, catalyzes the irreversible transamination of the L-tryptophan metabolite L-kynurenine to form kynurenic acid (KA). As a member of the malate-aspartate shuttle, it has a key role in the intracellular NAD(H) redox balance. Is important for metabolite exchange between mitochondria and cytosol, and for amino acid metabolism. Facilitates cellular uptake of long-chain free fatty acids. In Pongo abelii (Sumatran orangutan), this protein is Aspartate aminotransferase, mitochondrial (GOT2).